The chain runs to 297 residues: Coatomer subunit epsilon-2 (297 aa).

The protein belongs to the COPE family. As to quaternary structure, oligomeric complex that consists of at least the alpha, beta, beta', gamma, delta, epsilon and zeta subunits.

The protein resides in the cytoplasm. The protein localises to the golgi apparatus membrane. It localises to the cytoplasmic vesicle. It is found in the COPI-coated vesicle membrane. Its function is as follows. The coatomer is a cytosolic protein complex that binds to dilysine motifs and reversibly associates with Golgi non-clathrin-coated vesicles, which further mediate biosynthetic protein transport from the ER, via the Golgi up to the trans Golgi network. The coatomer complex is required for budding from Golgi membranes, and is essential for the retrograde Golgi-to-ER transport of dilysine-tagged proteins. The polypeptide is Coatomer subunit epsilon-2 (Oryza sativa subsp. indica (Rice)).